Consider the following 255-residue polypeptide: Pyridoxine 5'-phosphate synthase (255 aa).

3-amino-2-oxopropyl phosphate is bound by residues Asn-8 and Arg-19. The active-site Proton acceptor is His-44. Residues Arg-46 and His-51 each contribute to the 1-deoxy-D-xylulose 5-phosphate site. Residue Glu-74 is the Proton acceptor of the active site. Thr-111 contributes to the 1-deoxy-D-xylulose 5-phosphate binding site. Catalysis depends on His-202, which acts as the Proton donor. 3-amino-2-oxopropyl phosphate contacts are provided by residues Asp-203 and 225 to 226 (GH).

This sequence belongs to the PNP synthase family. As to quaternary structure, homooctamer; tetramer of dimers.

It localises to the cytoplasm. The enzyme catalyses 3-amino-2-oxopropyl phosphate + 1-deoxy-D-xylulose 5-phosphate = pyridoxine 5'-phosphate + phosphate + 2 H2O + H(+). Its pathway is cofactor biosynthesis; pyridoxine 5'-phosphate biosynthesis; pyridoxine 5'-phosphate from D-erythrose 4-phosphate: step 5/5. Catalyzes the complicated ring closure reaction between the two acyclic compounds 1-deoxy-D-xylulose-5-phosphate (DXP) and 3-amino-2-oxopropyl phosphate (1-amino-acetone-3-phosphate or AAP) to form pyridoxine 5'-phosphate (PNP) and inorganic phosphate. The sequence is that of Pyridoxine 5'-phosphate synthase from Xanthomonas oryzae pv. oryzae (strain PXO99A).